The primary structure comprises 177 residues: Parathyroid hormone-related protein (177 aa).

The N-terminal stretch at 1 to 24 is a signal peptide; that stretch reads MQRRLVQQWSVAVFLLSYAVPSCG. A propeptide spanning residues 25–34 is cleaved from the precursor; that stretch reads RSVEGLSRRL. The important for receptor binding stretch occupies residues 57 to 68; sequence RFFLHHLIAEIH. A disordered region spans residues 74–177; it reads ATSEVSPNSK…TSLELDSRRH (104 aa). Positions 76–90 are enriched in polar residues; that stretch reads SEVSPNSKPSPNTKN. Residues 108–129 carry the Nuclear localization signal motif; the sequence is TNKVETYKEQPLKTPGKKKKGK. A compositionally biased stretch (basic and acidic residues) spans 109 to 118; that stretch reads NKVETYKEQP. Over residues 122-132 the composition is skewed to basic residues; the sequence is PGKKKKGKPGK.

This sequence belongs to the parathyroid hormone family. In terms of assembly, interacts with PTH1R (via N-terminal extracellular domain). In terms of processing, there are 3 principal secretory forms, called PTHrP[1-36], PTHrP[38-94], and osteostatin (PTHrP[107-139]) arising from endoproteolytic cleavage of the initial translation product. Each of these secretory forms is believed to have one or more of its own receptors that mediates the normal paracrine, autocrine and endocrine actions. As to expression, ubiquitous. Also expressed in the mammary gland.

The protein localises to the secreted. It localises to the cytoplasm. It is found in the nucleus. Neuroendocrine peptide which is a critical regulator of cellular and organ growth, development, migration, differentiation and survival and of epithelial calcium ion transport. Acts by binding to its receptor, PTH1R, activating G protein-coupled receptor signaling. Regulates endochondral bone development and epithelial-mesenchymal interactions during the formation of the mammary glands and teeth. Required for skeletal homeostasis. Promotes mammary mesenchyme differentiation and bud outgrowth by modulating mesenchymal cell responsiveness to BMPs. Up-regulates BMPR1A expression in the mammary mesenchyme and this increases the sensitivity of these cells to BMPs and allows them to respond to BMP4 in a paracrine and/or autocrine fashion. BMP4 signaling in the mesenchyme, in turn, triggers epithelial outgrowth and augments MSX2 expression, which causes the mammary mesenchyme to inhibit hair follicle formation within the nipple sheath. Promotes colon cancer cell migration and invasion in an integrin alpha-6/beta-1-dependent manner through activation of Rac1. In terms of biological role, potent inhibitor of osteoclastic bone resorption. In Homo sapiens (Human), this protein is Parathyroid hormone-related protein.